A 169-amino-acid polypeptide reads, in one-letter code: Thaumatin-like pathogenesis-related protein 4 (169 aa).

Residues 1-21 (MATSSTVLFLLLAVFAASASA) form the signal peptide.

It belongs to the thaumatin family.

Associated with resistance against stem rust fungi. The protein is Thaumatin-like pathogenesis-related protein 4 (RASTL-4) of Avena sativa (Oat).